A 197-amino-acid chain; its full sequence is MPITPATSTHSSSNGTAEAILLELVDENGTTIGTAEKLAAHQPPGQLHRAFSVFLFDEQGRLLLQQRALGKYHSPGVWSNTCCGHPYPGEAPFAAAARRTHEELGVSPSLLAEAGTVRYNHPDPDSGLVEQEFNHLFVGLVQSPLRPDAEEIGDTAFVTAAELAERHAKDPFSSWFMTVLDAARPAVRELTGPSAGW.

Residues histidine 41 and histidine 48 each contribute to the Mn(2+) site. The 138-residue stretch at 46–183 folds into the Nudix hydrolase domain; it reads QLHRAFSVFL…SWFMTVLDAA (138 aa). Cysteine 83 is an active-site residue. Cysteine 83 provides a ligand contact to Mg(2+). Histidine 85 is a Mn(2+) binding site. Glutamate 103 serves as a coordination point for Mg(2+). The Mn(2+) site is built by glutamate 130 and glutamate 132. Glutamate 132 is a catalytic residue.

The protein belongs to the IPP isomerase type 1 family. Mg(2+) serves as cofactor. It depends on Mn(2+) as a cofactor.

The protein resides in the cytoplasm. It catalyses the reaction isopentenyl diphosphate = dimethylallyl diphosphate. Its pathway is isoprenoid biosynthesis; dimethylallyl diphosphate biosynthesis; dimethylallyl diphosphate from isopentenyl diphosphate: step 1/1. Functionally, catalyzes the 1,3-allylic rearrangement of the homoallylic substrate isopentenyl (IPP) to its highly electrophilic allylic isomer, dimethylallyl diphosphate (DMAPP). The protein is Isopentenyl-diphosphate Delta-isomerase of Streptomyces avermitilis (strain ATCC 31267 / DSM 46492 / JCM 5070 / NBRC 14893 / NCIMB 12804 / NRRL 8165 / MA-4680).